The primary structure comprises 427 residues: ATP-sensitive inward rectifier potassium channel 12 (427 aa).

Topologically, residues 1 to 77 (MTAASRANPY…LADMFTTCVD (77 aa)) are cytoplasmic. Position 75 is an S-nitrosocysteine (cysteine 75). A helical transmembrane segment spans residues 78–104 (IRWRYMLLIFSLAFLASWLLFGIIFWV). A 1,2-diacyl-sn-glycero-3-phospho-(1D-myo-inositol-4,5-bisphosphate) is bound by residues arginine 79 and arginine 81. Residues 105 to 129 (IAVAHGDLEPAEGRGRTPCVLQVHG) are Extracellular-facing. A disulfide bridge links cysteine 123 with cysteine 155. Positions 130–146 (FMAAFLFSIETQTTIGY) form an intramembrane region, helical; Pore-forming. K(+) is bound by residues threonine 143, isoleucine 144, glycine 145, and tyrosine 146. The Selectivity filter signature appears at 143-148 (TIGYGL). At 147 to 155 (GLRCVTEEC) the chain is on the extracellular side. A helical transmembrane segment spans residues 156 to 183 (PVAVFMVVAQSIVGCIIDSFMIGAIMAK). A 1,2-diacyl-sn-glycero-3-phospho-(1D-myo-inositol-4,5-bisphosphate) contacts are provided by lysine 183 and lysine 188. The Cytoplasmic portion of the chain corresponds to 184 to 427 (MGRPKKRAQT…ERPYRRESEI (244 aa)). The tract at residues 387–427 (DEEDEVATDRDGRSPQPEHDFDRLQASSGALERPYRRESEI) is disordered. A compositionally biased stretch (basic and acidic residues) spans 393–409 (ATDRDGRSPQPEHDFDR). Residues 425 to 427 (SEI) carry the PDZ-binding motif.

This sequence belongs to the inward rectifier-type potassium channel (TC 1.A.2.1) family. KCNJ12 subfamily. In terms of assembly, homotetramer. Forms heteromer with KCNJ4. Can form heteromeric channels with Kir2.6/KCNJ18. Association, via its PDZ-recognition domain, with LIN7A, LIN7B, LIN7C, DLG1, CASK and APBA1 plays a key role in its localization and trafficking. Highest level in cerebellum. Moderately found in kidney, forebrain and skeletal muscle. Not detected in uterus, liver and pancreas.

Its subcellular location is the membrane. The protein resides in the cell membrane. It localises to the sarcolemma. It is found in the T-tubule. The catalysed reaction is K(+)(in) = K(+)(out). Its activity is regulated as follows. Activated by phosphatidylinositol 4,5-biphosphate (PtdIns(4,5)P2). PtdIns(4,5)P2 binding to the cytoplasmic side of the channel triggers a conformation change leading to channel opening. Inhibited by Ba(2+). In terms of biological role, inward rectifying potassium channel that probably participates in controlling the resting membrane potential in electrically excitable cells. It probably participates in establishing action potential waveform and excitability of neuronal and muscle tissues. Inward rectifier potassium channels are characterized by a greater tendency to allow potassium to flow into the cell rather than out of it. Their voltage dependence is regulated by the concentration of extracellular potassium; as external potassium is raised, the voltage range of the channel opening shifts to more positive voltages. The inward rectification is mainly due to the blockage of outward current by internal magnesium. The chain is ATP-sensitive inward rectifier potassium channel 12 (Kcnj12) from Rattus norvegicus (Rat).